We begin with the raw amino-acid sequence, 583 residues long: Aspartate--tRNA(Asp/Asn) ligase (583 aa).

E171 is an L-aspartate binding site. Residues 195 to 198 (QLFK) form an aspartate region. R217 serves as a coordination point for L-aspartate. ATP contacts are provided by residues 217–219 (RDE) and Q226. H443 serves as a coordination point for L-aspartate. E476 contacts ATP. R483 contributes to the L-aspartate binding site. 528-531 (GLDR) provides a ligand contact to ATP.

This sequence belongs to the class-II aminoacyl-tRNA synthetase family. Type 1 subfamily. As to quaternary structure, homodimer.

The protein localises to the cytoplasm. It catalyses the reaction tRNA(Asx) + L-aspartate + ATP = L-aspartyl-tRNA(Asx) + AMP + diphosphate. Its function is as follows. Aspartyl-tRNA synthetase with relaxed tRNA specificity since it is able to aspartylate not only its cognate tRNA(Asp) but also tRNA(Asn). Reaction proceeds in two steps: L-aspartate is first activated by ATP to form Asp-AMP and then transferred to the acceptor end of tRNA(Asp/Asn). This is Aspartate--tRNA(Asp/Asn) ligase from Ruthia magnifica subsp. Calyptogena magnifica.